The following is a 185-amino-acid chain: Large ribosomal subunit protein uL5 (185 aa).

The protein belongs to the universal ribosomal protein uL5 family. As to quaternary structure, part of the 50S ribosomal subunit; part of the 5S rRNA/L5/L18/L25 subcomplex. Contacts the 5S rRNA and the P site tRNA. Forms a bridge to the 30S subunit in the 70S ribosome.

Functionally, this is one of the proteins that bind and probably mediate the attachment of the 5S RNA into the large ribosomal subunit, where it forms part of the central protuberance. In the 70S ribosome it contacts protein S13 of the 30S subunit (bridge B1b), connecting the 2 subunits; this bridge is implicated in subunit movement. Contacts the P site tRNA; the 5S rRNA and some of its associated proteins might help stabilize positioning of ribosome-bound tRNAs. The sequence is that of Large ribosomal subunit protein uL5 from Nitrobacter hamburgensis (strain DSM 10229 / NCIMB 13809 / X14).